A 252-amino-acid chain; its full sequence is Ribosomal RNA small subunit methyltransferase J (252 aa).

Residues 104-105 (RD), 120-121 (ER), and D174 contribute to the S-adenosyl-L-methionine site.

This sequence belongs to the methyltransferase superfamily. RsmJ family.

Its subcellular location is the cytoplasm. It carries out the reaction guanosine(1516) in 16S rRNA + S-adenosyl-L-methionine = N(2)-methylguanosine(1516) in 16S rRNA + S-adenosyl-L-homocysteine + H(+). In terms of biological role, specifically methylates the guanosine in position 1516 of 16S rRNA. The polypeptide is Ribosomal RNA small subunit methyltransferase J (Mannheimia succiniciproducens (strain KCTC 0769BP / MBEL55E)).